The sequence spans 240 residues: Serine protease SplB (240 aa).

An N-terminal signal peptide occupies residues 1 to 36; that stretch reads MNKNVVIKSLAALTILTSVTGIGTTLVEEVQQTAKA. Catalysis depends on charge relay system residues His75, Asp113, and Ser193.

Belongs to the peptidase S1B family.

It is found in the secreted. Serine protease that cleaves specifically after the sequence Trp-Glu-Leu-Gln. This is Serine protease SplB (splB) from Staphylococcus aureus (strain USA300).